Here is a 142-residue protein sequence, read N- to C-terminus: Coactosin-like protein (142 aa).

N-acetylalanine is present on A2. In terms of domain architecture, ADF-H spans 2-130 (ATKIDKEACR…EEDFIRSELK (129 aa)). Phosphoserine is present on S23. Positions 66-75 (TGDAMSKRSK) are flexible and important for F-actin binding. At K102 the chain carries N6-acetyllysine. S141 carries the post-translational modification Phosphoserine.

The protein belongs to the actin-binding proteins ADF family. Coactosin subfamily. In terms of assembly, interacts with 5-lipoxygenase (ALOX5/5LO) in a calcium-independent manner. Binds to F-actin with a stoichiometry of 1:2.

Its subcellular location is the cytoplasm. The protein resides in the cytoskeleton. It localises to the nucleus. Its function is as follows. Binds to F-actin in a calcium-independent manner. Has no direct effect on actin depolymerization. Acts as a chaperone for ALOX5 (5LO), influencing both its stability and activity in leukotrienes synthesis. The protein is Coactosin-like protein of Rattus norvegicus (Rat).